The chain runs to 515 residues: 2-isopropylmalate synthase (515 aa).

One can recognise a Pyruvate carboxyltransferase domain in the interval V5–H267. D14, H202, H204, and N238 together coordinate Mn(2+). The interval K392–V515 is regulatory domain.

The protein belongs to the alpha-IPM synthase/homocitrate synthase family. LeuA type 1 subfamily. In terms of assembly, homodimer. It depends on Mn(2+) as a cofactor.

The protein resides in the cytoplasm. It catalyses the reaction 3-methyl-2-oxobutanoate + acetyl-CoA + H2O = (2S)-2-isopropylmalate + CoA + H(+). It participates in amino-acid biosynthesis; L-leucine biosynthesis; L-leucine from 3-methyl-2-oxobutanoate: step 1/4. Functionally, catalyzes the condensation of the acetyl group of acetyl-CoA with 3-methyl-2-oxobutanoate (2-ketoisovalerate) to form 3-carboxy-3-hydroxy-4-methylpentanoate (2-isopropylmalate). This Aliivibrio fischeri (strain MJ11) (Vibrio fischeri) protein is 2-isopropylmalate synthase.